A 161-amino-acid chain; its full sequence is Ureidoglycolate lyase (161 aa).

It belongs to the ureidoglycolate lyase family. Homodimer. Requires Ni(2+) as cofactor.

It catalyses the reaction (S)-ureidoglycolate = urea + glyoxylate. It functions in the pathway nitrogen metabolism; (S)-allantoin degradation. In terms of biological role, catalyzes the catabolism of the allantoin degradation intermediate (S)-ureidoglycolate, generating urea and glyoxylate. Involved in the utilization of allantoin as nitrogen source. This is Ureidoglycolate lyase from Rhodobacter capsulatus (strain ATCC BAA-309 / NBRC 16581 / SB1003).